The chain runs to 544 residues: Cannabidiolic acid synthase (544 aa).

The signal sequence occupies residues 1–28 (MKCSTFSFWFVCKIIFFFFSFNIQTSIA). Residues cysteine 37 and cysteine 99 are joined by a disulfide bond. N-linked (GlcNAc...) asparagine glycans are attached at residues asparagine 45 and asparagine 65. An FAD-binding PCMH-type domain is found at 77–251 (TTPKPLVIVT…VAWKIRLVAV (175 aa)). FAD contacts are provided by residues 109–115 (TRSGGHD) and serine 120. The 6-(S-cysteinyl)-8alpha-(pros-histidyl)-FAD (His-Cys) cross-link spans 114-176 (HDSEGMSYIS…ENLSLAAGYC (63 aa)). An N-linked (GlcNAc...) asparagine glycan is attached at asparagine 168. FAD contacts are provided by residues cysteine 176, 180-184 (CAGGH), tyrosine 190, glutamate 236, and isoleucine 241. Histidine 291 is a cannabigerolate binding site. 3 N-linked (GlcNAc...) asparagine glycosylation sites follow: asparagine 296, asparagine 304, and asparagine 328. 2 residues coordinate cannabigerolate: tyrosine 416 and glutamate 441. 480–482 (YLN) is an FAD binding site. Residue tyrosine 483 is the Proton acceptor of the active site. N-linked (GlcNAc...) asparagine glycosylation is present at asparagine 498.

The protein belongs to the oxygen-dependent FAD-linked oxidoreductase family. Monomer. Requires FAD as cofactor. Post-translationally, glycosylated. The FAD cofactor is bound via a bicovalent 6-S-cysteinyl, 8alpha-N1-histidyl FAD linkage. As to expression, expressed in young leaves.

The protein localises to the secreted. The protein resides in the extracellular space. Its subcellular location is the apoplast. It catalyses the reaction cannabigerolate + O2 = cannabidiolate + H2O2. It functions in the pathway secondary metabolite biosynthesis; terpenoid biosynthesis. Inhibited by Hg(2+). In terms of biological role, oxidoreductase involved in the biosynthesis of cannabinoids-related terpenophenolic natural products, which have pharmacological activity. Catalyzes the stereoselective oxidative cyclization of the monoterpene moiety in cannabigerolic acid (CBGA), producing cannabidiolate (CBDA), the major cannabioid in fiber-type Cannabis plants. Can also use cannabinerolic acid as substrate, but not cannabigerol or cannabinerol. This is Cannabidiolic acid synthase from Cannabis sativa (Hemp).